The following is a 301-amino-acid chain: Protein FdhE homolog (301 aa).

It belongs to the FdhE family.

It is found in the cytoplasm. Necessary for formate dehydrogenase activity. The protein is Protein FdhE homolog of Erwinia tasmaniensis (strain DSM 17950 / CFBP 7177 / CIP 109463 / NCPPB 4357 / Et1/99).